The chain runs to 153 residues: Superoxide dismutase [Cu-Zn] (153 aa).

Residue Asn-24 is glycosylated (N-linked (GlcNAc...) asparagine). Cu cation is bound by residues His-47, His-49, and His-64. The cysteines at positions 58 and 147 are disulfide-linked. Zn(2+) contacts are provided by His-64, His-72, His-81, and Asp-84. Position 121 (His-121) interacts with Cu cation. Residues 126–137 are compositionally biased toward basic and acidic residues; the sequence is DLGRGGNEESKK. The tract at residues 126–145 is disordered; sequence DLGRGGNEESKKTGNAGPRP. Arg-144 contacts substrate.

This sequence belongs to the Cu-Zn superoxide dismutase family. Homodimer. Cu cation serves as cofactor. Zn(2+) is required as a cofactor.

It localises to the cytoplasm. It carries out the reaction 2 superoxide + 2 H(+) = H2O2 + O2. Its function is as follows. Destroys radicals which are normally produced within the cells and which are toxic to biological systems. The sequence is that of Superoxide dismutase [Cu-Zn] from Humicola lutea.